We begin with the raw amino-acid sequence, 287 residues long: Undecaprenyl-diphosphatase (287 aa).

Transmembrane regions (helical) follow at residues 6-26 (LHLL…FIPV), 45-65 (SGKV…MWIF), 89-109 (NLLL…KSIK), 111-131 (VFYH…IMLW), 204-224 (ATEF…VYDL), 238-258 (AIAV…RAVL), and 266-286 (YRVF…WIYA).

The protein belongs to the UppP family.

The protein resides in the cell inner membrane. The enzyme catalyses di-trans,octa-cis-undecaprenyl diphosphate + H2O = di-trans,octa-cis-undecaprenyl phosphate + phosphate + H(+). Its function is as follows. Catalyzes the dephosphorylation of undecaprenyl diphosphate (UPP). Confers resistance to bacitracin. The chain is Undecaprenyl-diphosphatase from Bordetella bronchiseptica (strain ATCC BAA-588 / NCTC 13252 / RB50) (Alcaligenes bronchisepticus).